Consider the following 716-residue polypeptide: Interleukin-31 receptor subunit alpha (716 aa).

The N-terminal stretch at 1–18 (MWTLALWAFSFLCKFSLA) is a signal peptide. Residues 19–499 (VLPTKPENIS…TNGVRINFKT (481 aa)) lie on the Extracellular side of the membrane. 5 consecutive Fibronectin type-III domains span residues 23–115 (KPEN…IAKT), 117–211 (PPII…TMEE), 213–304 (PHVL…ILRI), 305–403 (PDVH…QAYA), and 408–502 (PLKG…TLSI). N-linked (GlcNAc...) asparagine glycans are attached at residues Asn-36, Asn-48, and Asn-64. N-linked (GlcNAc...) asparagine glycosylation occurs at Asn-382. The chain crosses the membrane as a helical span at residues 500-520 (LSISVFEIVLLTSLVGGGLLL). Residues 521–716 (LSIKTVTFGL…NIPEHSKGEV (196 aa)) are Cytoplasmic-facing. Disordered stretches follow at residues 622-641 (EYVT…FKEP) and 648-696 (ASED…LKNS). Residues 670-679 (QPSSSCQSPG) show a composition bias toward polar residues.

Belongs to the type I cytokine receptor family. Type 2 subfamily. Heterodimer with OSMR. Interacts with JAK1 and STAT3. N-glycosylated. As to expression, expressed in a subset of dorsal root ganglia neurons. Expressed in spinal cord and trigeminal ganglion (at protein level). Expressed in skin, testis, bone marrow and thymus.

The protein localises to the cell membrane. The protein resides in the presynaptic cell membrane. It localises to the cell projection. Its subcellular location is the axon. Functionally, associates with OSMR to form the interleukin-31 receptor which activates STAT3 and to a lower extent STAT1 and STAT5. May function in skin immunity. Mediates IL31-induced itch, probably in a manner dependent on cation channels TRPA1 and TRPV1. Positively regulates numbers and cycling status of immature subsets of myeloid progenitor cells in bone marrow in vivo and enhances myeloid progenitor cell survival in vitro. This Mus musculus (Mouse) protein is Interleukin-31 receptor subunit alpha (Il31ra).